Consider the following 326-residue polypeptide: Phosphate acyltransferase (326 aa).

This sequence belongs to the PlsX family. Homodimer. Probably interacts with PlsY.

Its subcellular location is the cytoplasm. The catalysed reaction is a fatty acyl-[ACP] + phosphate = an acyl phosphate + holo-[ACP]. It functions in the pathway lipid metabolism; phospholipid metabolism. Catalyzes the reversible formation of acyl-phosphate (acyl-PO(4)) from acyl-[acyl-carrier-protein] (acyl-ACP). This enzyme utilizes acyl-ACP as fatty acyl donor, but not acyl-CoA. This chain is Phosphate acyltransferase, found in Petrotoga mobilis (strain DSM 10674 / SJ95).